The primary structure comprises 529 residues: Intraflagellar transport protein 56 (529 aa).

Residues Met1–Ala21 are disordered. Residues Glu11 to Ala21 show a composition bias toward basic and acidic residues. TPR repeat units follow at residues Gly57–Pro90, Ser154–Cys187, Ala189–Ser221, Ser285–Leu321, Val359–Ser392, and Pro428–Thr461.

This sequence belongs to the IFT56 family.

It localises to the cell projection. The protein resides in the cilium. Its subcellular location is the flagellum. The protein localises to the cytoplasm. It is found in the cytoskeleton. It localises to the flagellum axoneme. The protein resides in the flagellum basal body. Its function is as follows. Component of the intraflagellar transport complex B (IFT-B) involved in flagellar assembly. This Giardia intestinalis (strain ATCC 50803 / WB clone C6) (Giardia lamblia) protein is Intraflagellar transport protein 56.